A 746-amino-acid polypeptide reads, in one-letter code: Root phototropism protein 3 (746 aa).

The tract at residues M1–G24 is disordered. A compositionally biased stretch (gly residues) spans G9–R19. A BTB domain is found at S54–A122. One can recognise an NPH3 domain in the interval D250 to K605. Residues E461–N500 are disordered. Low complexity predominate over residues S466–S478. A Phosphotyrosine modification is found at Y546. Residues S708–S746 form a disordered region. Residues P735–S746 show a composition bias toward basic residues.

Belongs to the NPH3 family. Interacts with PKS1, PKS2, RPT2, PHOT1 and PHOT2. Subunit of a complex made of CAR6, PHOT1 and RPT3/NPH3. Phosphorylated in the dark. Expressed in hypocotyls, guard cells and mesophyll cells.

The protein localises to the cell membrane. It participates in protein modification; protein ubiquitination. In terms of biological role, may act as a substrate-specific adapter of an E3 ubiquitin-protein ligase complex (CUL3-RBX1-BTB) which mediates the ubiquitination and subsequent proteasomal degradation of target proteins. Signal transducer of the phototropic response and photo-induced movements. Involved in the phot1 pathway under low blue light (LBL) fluence rate and in the phot2 pathway under higher fluence rate of blue light (HBL). Necessary for root and hypocotyl phototropisms, but not for the regulation of stomata opening. Not involved in chloroplast accumulation and translocation. This Arabidopsis thaliana (Mouse-ear cress) protein is Root phototropism protein 3 (RPT3).